The sequence spans 71 residues: Large ribosomal subunit protein bL31 (71 aa).

Zn(2+) contacts are provided by C16, C18, C37, and C40.

Belongs to the bacterial ribosomal protein bL31 family. Type A subfamily. As to quaternary structure, part of the 50S ribosomal subunit. It depends on Zn(2+) as a cofactor.

Functionally, binds the 23S rRNA. In Pseudomonas putida (strain GB-1), this protein is Large ribosomal subunit protein bL31.